The sequence spans 37 residues: Cellular retinoic acid-binding protein 2 (37 aa).

Residues 21 to 31 (KALGVNMMLRK) carry the Nuclear localization signal motif.

It belongs to the calycin superfamily. Fatty-acid binding protein (FABP) family. Embryo.

The protein resides in the cytoplasm. Its subcellular location is the endoplasmic reticulum. The protein localises to the nucleus. Functionally, transports retinoic acid to the nucleus. Regulates the access of retinoic acid to the nuclear retinoic acid receptors. In Gallus gallus (Chicken), this protein is Cellular retinoic acid-binding protein 2 (CRABP2).